Reading from the N-terminus, the 408-residue chain is Histidine--tRNA ligase (408 aa).

The protein belongs to the class-II aminoacyl-tRNA synthetase family. In terms of assembly, homodimer.

It localises to the cytoplasm. The enzyme catalyses tRNA(His) + L-histidine + ATP = L-histidyl-tRNA(His) + AMP + diphosphate + H(+). In Campylobacter jejuni subsp. doylei (strain ATCC BAA-1458 / RM4099 / 269.97), this protein is Histidine--tRNA ligase.